Here is a 304-residue protein sequence, read N- to C-terminus: Acetylglutamate kinase (304 aa).

Substrate contacts are provided by residues 74-75 (GG), R96, and N201.

The protein belongs to the acetylglutamate kinase family. ArgB subfamily.

The protein resides in the cytoplasm. It carries out the reaction N-acetyl-L-glutamate + ATP = N-acetyl-L-glutamyl 5-phosphate + ADP. Its pathway is amino-acid biosynthesis; L-arginine biosynthesis; N(2)-acetyl-L-ornithine from L-glutamate: step 2/4. Catalyzes the ATP-dependent phosphorylation of N-acetyl-L-glutamate. This chain is Acetylglutamate kinase, found in Alkalilimnicola ehrlichii (strain ATCC BAA-1101 / DSM 17681 / MLHE-1).